A 212-amino-acid polypeptide reads, in one-letter code: MVARNQVAADNAISPAAEPRRRSEPSSSSSSSSPAAPVRPRPCPAVPAPAPGDTHFRTFRSHSDYRRITRTSALLDACGFYWGPLSVHGAHERLRAEPVGTFLVRDSRQRNCFFALSVKMASGPTSIRVHFQAGRFHLDGSRETFDCLFELLEHYVAAPRRMLGAPLRQRRVRPLQELCRQRIVAAVGRENLARIPLNPVLRDYLSSFPFQI.

The disordered stretch occupies residues 1-55; the sequence is MVARNQVAADNAISPAAEPRRRSEPSSSSSSSSPAAPVRPRPCPAVPAPAPGDTH. Residues 25–36 show a composition bias toward low complexity; the sequence is PSSSSSSSSPAA. Over residues 37–50 the composition is skewed to pro residues; that stretch reads PVRPRPCPAVPAPA. A kinase inhibitory region (KIR) region spans residues 56–67; it reads FRTFRSHSDYRR. The interval 68 to 79 is extended SH2 subdomain (ESS); that stretch reads ITRTSALLDACG. Residues 80–175 form the SH2 domain; it reads FYWGPLSVHG…PLRQRRVRPL (96 aa). Residues 162 to 211 enclose the SOCS box domain; that stretch reads MLGAPLRQRRVRPLQELCRQRIVAAVGRENLARIPLNPVLRDYLSSFPFQ. The tract at residues 174-183 is interaction with Elongin BC complex; it reads PLQELCRQRI.

This sequence belongs to the SOCS1 family. As to quaternary structure, interacts with multiple activated proteins of the tyrosine kinase signaling pathway including JAK family kinases, TEC, KIT, GRB2 and VAV. Binding to JAKs is mediated through the KIR and SH2 domain to a phosphorylated tyrosine residue within the JAK JH1 domain. Binds the SH3 domain of GRB2 via diproline determinants in the N-terminus, and the N-terminal regulatory domain of VAV. Interacts with the Elongin BC complex (ELOB and ELOC). Component of an ECS CBC(SOCS1) E3 ubiquitin-protein ligase complex which contains Elongin BC, CUL5, RBX1 and SOCS1. Interacts (via SH2 domain and SOCS box) with TRIM8. Interacts with CUL2. Interacts with AXL and FGFR3. Interacts with INSR. Interacts with TRIM8. Interacts with DCUN1D1. Interacts with IFNGR1. As to expression, high expression in thymus. Lower expression in lung and spleen. Expressed in both Th1 and Th2 cells.

It is found in the nucleus. Its subcellular location is the cytoplasmic vesicle. The protein operates within protein modification; protein ubiquitination. Functionally, essential negative regulator of type I and type II interferon (IFN) signaling, as well as that of other cytokines, including IL2, IL4, IL6 and leukemia inhibitory factor (LIF). Downregulates cytokine signaling by inhibiting the JAK/STAT signaling pathway. Acts by binding to JAK proteins and to IFNGR1 and inhibiting their kinase activity. In vitro, suppresses Tec protein-tyrosine activity. Regulates IFN-gamma (IFNG)-mediated sensory neuron survival. Probable substrate recognition component of an ECS (Elongin BC-CUL2/5-SOCS-box protein) E3 ubiquitin ligase complex which mediates the ubiquitination and subsequent proteasomal degradation of target proteins. The sequence is that of Suppressor of cytokine signaling 1 from Mus musculus (Mouse).